Reading from the N-terminus, the 144-residue chain is Bacilliredoxin BT9727_3899 (144 aa).

This sequence belongs to the bacilliredoxin family.

The sequence is that of Bacilliredoxin BT9727_3899 from Bacillus thuringiensis subsp. konkukian (strain 97-27).